The following is a 557-amino-acid chain: Dicarboxylate transporter 1, chloroplastic (557 aa).

Residues 1–69 constitute a chloroplast transit peptide; sequence MASLALSGSC…STLVKASSTV (69 aa). The next 12 helical transmembrane spans lie at 90–110, 122–142, 158–178, 229–249, 256–276, 305–325, 355–375, 376–396, 411–431, 438–458, 477–497, and 531–551; these read AAIK…FVPV, LAIF…LGAV, FAAA…LAFF, AGGI…SNVG, LGSW…SMFL, AAIV…YLIY, IMAA…KLGV, DAVT…VVTW, WFAA…IEWF, FVGG…LLYF, AFLS…LVLA, and YGFL…GAWW.

The protein belongs to the SLC13A/DASS transporter (TC 2.A.47) family. DIT1 subfamily. As to expression, expressed in roots, rosette and cauline leaves, stems, flowers and siliques.

The protein localises to the plastid. It localises to the chloroplast inner membrane. Functionally, 2-oxoglutarate/malate translocator involved with DIT2-1 in primary ammonia assimilation and in the re-assimilation of ammonia generated by the photorespiratory pathway. Imports 2-oxoglutarate into plastids as precursor for ammonia assimilation. 2-oxoglutarate is converted to glutamate, the end product of ammonia assimilation, which is exported to the cytosol by DIT2-1. This chain is Dicarboxylate transporter 1, chloroplastic (DIT1), found in Arabidopsis thaliana (Mouse-ear cress).